A 98-amino-acid polypeptide reads, in one-letter code: NADH-ubiquinone oxidoreductase chain 4L (98 aa).

Helical transmembrane passes span 1-21 (MAPI…GVLI), 28-48 (STLL…TLLI), and 59-79 (APLI…ALLV).

Belongs to the complex I subunit 4L family. As to quaternary structure, core subunit of respiratory chain NADH dehydrogenase (Complex I) which is composed of 45 different subunits.

It localises to the mitochondrion inner membrane. It carries out the reaction a ubiquinone + NADH + 5 H(+)(in) = a ubiquinol + NAD(+) + 4 H(+)(out). Its function is as follows. Core subunit of the mitochondrial membrane respiratory chain NADH dehydrogenase (Complex I) which catalyzes electron transfer from NADH through the respiratory chain, using ubiquinone as an electron acceptor. Part of the enzyme membrane arm which is embedded in the lipid bilayer and involved in proton translocation. The polypeptide is NADH-ubiquinone oxidoreductase chain 4L (MT-ND4L) (Isoodon macrourus (Short-nosed bandicoot)).